The primary structure comprises 147 residues: Hemoglobin subunit beta-2 (147 aa).

Positions 3 to 147 (EWTDEERTII…VVSALGRQYH (145 aa)) constitute a Globin domain. Positions 64 and 93 each coordinate heme b.

The protein belongs to the globin family. As to quaternary structure, hb 2 is a heterotetramer of two alpha-2 and two beta-2 chains. Hb 3 is a heterotetramer of two alpha-1 and two beta-2 chains. Red blood cells.

In terms of biological role, involved in oxygen transport from gills to the various peripheral tissues. This Gadus morhua (Atlantic cod) protein is Hemoglobin subunit beta-2 (hbb2).